The chain runs to 82 residues: Large ribosomal subunit protein bL27c (82 aa).

Residues 1 to 22 are disordered; it reads MAHKKGAGSTKNGRDSNSKRLG.

This sequence belongs to the bacterial ribosomal protein bL27 family.

The protein resides in the plastid. It localises to the chloroplast. This chain is Large ribosomal subunit protein bL27c (rpl27), found in Chrysotila carterae (Marine alga).